The primary structure comprises 199 residues: Holliday junction branch migration complex subunit RuvA (199 aa).

Residues 1–64 are domain I; sequence MIALLTGKLA…EDAINLYGFR (64 aa). Residues 65 to 143 form a domain II region; sequence TQQEKELFQL…KLGLAQPQAG (79 aa). A flexible linker region spans residues 144-148; sequence GATAP. The segment at 149-199 is domain III; the sequence is AKQEIRDDVLSALINLGYKEAVVQKALAELKVTEDATVELVLKQALKILMK.

The protein belongs to the RuvA family. Homotetramer. Forms an RuvA(8)-RuvB(12)-Holliday junction (HJ) complex. HJ DNA is sandwiched between 2 RuvA tetramers; dsDNA enters through RuvA and exits via RuvB. An RuvB hexamer assembles on each DNA strand where it exits the tetramer. Each RuvB hexamer is contacted by two RuvA subunits (via domain III) on 2 adjacent RuvB subunits; this complex drives branch migration. In the full resolvosome a probable DNA-RuvA(4)-RuvB(12)-RuvC(2) complex forms which resolves the HJ.

Its subcellular location is the cytoplasm. In terms of biological role, the RuvA-RuvB-RuvC complex processes Holliday junction (HJ) DNA during genetic recombination and DNA repair, while the RuvA-RuvB complex plays an important role in the rescue of blocked DNA replication forks via replication fork reversal (RFR). RuvA specifically binds to HJ cruciform DNA, conferring on it an open structure. The RuvB hexamer acts as an ATP-dependent pump, pulling dsDNA into and through the RuvAB complex. HJ branch migration allows RuvC to scan DNA until it finds its consensus sequence, where it cleaves and resolves the cruciform DNA. The sequence is that of Holliday junction branch migration complex subunit RuvA from Geobacter sp. (strain M21).